The primary structure comprises 1483 residues: Cystic fibrosis transmembrane conductance regulator (1483 aa).

At 1 to 77 (MQRSPLEKAS…KLINALRRCF (77 aa)) the chain is on the cytoplasmic side. A helical transmembrane segment spans residues 78–98 (FWRFAFYGILLYLGEVTKAVQ). The 285-residue stretch at 81-365 (FAFYGILLYL…WAVQTWYDSL (285 aa)) folds into the ABC transmembrane type-1 1 domain. The Extracellular portion of the chain corresponds to 99-122 (PLLLGRIIASYDPDNKQERSIAIY). Residues 123-146 (LAIGLCLLFIMRPLLLHPAIFGLH) form a helical membrane-spanning segment. Residues 147 to 195 (HIGMQIRIAMFSLIYKKTLKLSSRVLDKISIGQLVSLLSNNLNKFDEGL) lie on the Cytoplasmic side of the membrane. A helical transmembrane segment spans residues 196–216 (ALAHFVWIAPLQVTLLMGLLW). Residues 217-222 (DLLQAS) are Extracellular-facing. The helical transmembrane segment at 223 to 243 (AFCGLAFLIVLALVQAGLGRM) threads the bilayer. The Cytoplasmic portion of the chain corresponds to 244–298 (IMKYRDQRAGKINERLVITSEVIENIQSVKAYCWEEAMEKIIENIRQTELKLTRK). The helical transmembrane segment at 299 to 319 (AAHVRYFNSSAFFFSGFFVVS) threads the bilayer. The Extracellular portion of the chain corresponds to 320-339 (LSVLPYALIKTIILRKIFTT). Residues 340-358 (ISFCIVLRMAVTRQFPWAV) form a helical membrane-spanning segment. Over 359–859 (QTWYDSLGAI…YLRYITVHKN (501 aa)) the chain is Cytoplasmic. ATP contacts are provided by residues tryptophan 401, serine 434, 458–465 (GSTGAGKT), and glutamine 493. Residues 423 to 646 (NGDNSLFFSN…RPDFSSKLMG (224 aa)) form the ABC transporter 1 domain. Residue cysteine 524 is the site of S-palmitoyl cysteine attachment. Serine 549 and serine 660 each carry phosphoserine. Residues 654-832 (SPERRNSIIT…EEINEEDLKE (179 aa)) form a disordered R region region. Serine 670 is subject to Phosphoserine; by PKA. A Phosphoserine modification is found at serine 686. Residue lysine 688 forms a Glycyl lysine isopeptide (Lys-Gly) (interchain with G-Cter in ubiquitin) linkage. A phosphoserine mark is found at serine 700 and serine 712. Residue threonine 717 is modified to Phosphothreonine. A phosphoserine mark is found at serine 737, serine 768, serine 791, serine 796, and serine 814. Residues 860 to 880 (LIFVLIWCLVIFLAEVAVSLV) form a helical membrane-spanning segment. Residues 860 to 1156 (LIFVLIWCLV…AVNSSIEVDS (297 aa)) enclose the ABC transmembrane type-1 2 domain. The Extracellular portion of the chain corresponds to 881 to 919 (VLWILRNLSSQDKGNSTQSVNSSYAVIFTSTSAYYIFYI). 3 N-linked (GlcNAc...) asparagine glycosylation sites follow: asparagine 887, asparagine 895, and asparagine 901. Residues 920 to 940 (YVGVADTLLALGLFRGLPLVH) form a discontinuously helical membrane-spanning segment. Topologically, residues 941–991 (TLITVSKILHHKMLHSVLQAPMSTLNTLKAGGILNRFSKDIAILDDLLPLT) are cytoplasmic. Residues 992 to 1012 (IFDFIQLLLIVIGAVAVVSVL) form a helical membrane-spanning segment. At 1013–1014 (QP) the chain is on the extracellular side. Residues 1015–1035 (YIFLATVPVIAAFIILRAYFL) traverse the membrane as a helical segment. Over 1036 to 1096 (HTSQQLKQLE…TANWFLYLST (61 aa)) the chain is Cytoplasmic. The helical transmembrane segment at 1097 to 1117 (LRWFQMRMEIIFVIFFIAVTF) threads the bilayer. At 1118–1131 (ISILTTGEGEGTVG) the chain is on the extracellular side. A helical transmembrane segment spans residues 1132-1152 (IILTLAMNIMGTLQWAVNSSI). The Cytoplasmic segment spans residues 1153 to 1483 (EVDSLMRSVS…TEDEVQDTRL (331 aa)). Residues 1213 to 1446 (MTVKDLTAKY…RSAFRQAIGP (234 aa)) enclose the ABC transporter 2 domain. ATP-binding positions include tyrosine 1222 and 1247–1254 (GRTGSGKS). Positions 1389-1483 (RTLKQAFADC…TEDEVQDTRL (95 aa)) are interaction with GORASP2. Cysteine 1398 carries S-palmitoyl cysteine lipidation. The interval 1444–1483 (IGPPERPGLLPHRLSSRQRSPSRIAALKEETEDEVQDTRL) is disordered. Residue serine 1459 is modified to Phosphoserine. Over residues 1473–1483 (ETEDEVQDTRL) the composition is skewed to acidic residues. Residues 1481 to 1483 (TRL) carry the PDZ-binding motif.

It belongs to the ABC transporter superfamily. ABCC family. CFTR transporter (TC 3.A.1.202) subfamily. As to quaternary structure, monomer; does not require oligomerization for channel activity. May form oligomers in the membrane. Interacts with SLC26A3, SLC26A6 and NHERF1. Interacts with SHANK2. Interacts with MYO6. Interacts (via C-terminus) with GOPC (via PDZ domain); this promotes CFTR internalization and thereby decreases channel activity. Interacts with SLC4A7 through NHERF1. Found in a complex with MYO5B and RAB11A. Interacts with ANO1. Interacts with SLC26A8. Interacts with AHCYL1; the interaction increases CFTR activity. Interacts with CSE1L. The core-glycosylated form interacts with GORASP2 (via PDZ GRASP-type 1 domain) in respone to ER stress. Interacts with MARCHF2; the interaction leads to CFTR ubiqtuitination and degradation. Interacts with ADGRG2. In terms of processing, N-glycosylated. Phosphorylated; cAMP treatment promotes phosphorylation and activates the channel. Dephosphorylation decreases the ATPase activity (in vitro). Phosphorylation at PKA sites activates the channel. Phosphorylation at PKC sites enhances the response to phosphorylation by PKA. Phosphorylated by AMPK; this inhibits channel activity. Post-translationally, ubiquitinated, leading to its degradation in the lysosome. Deubiquitination by USP10 in early endosomes enhances its endocytic recycling to the cell membrane. Ubiquitinated by RNF185 during ER stress. Ubiquitinated by MARCHF2.

It localises to the apical cell membrane. Its subcellular location is the early endosome membrane. The protein localises to the cell membrane. The protein resides in the recycling endosome membrane. It is found in the endoplasmic reticulum membrane. It localises to the nucleus. It carries out the reaction ATP + H2O + closed Cl(-) channel = ADP + phosphate + open Cl(-) channel.. The catalysed reaction is chloride(in) = chloride(out). The enzyme catalyses hydrogencarbonate(in) = hydrogencarbonate(out). It catalyses the reaction ATP + H2O = ADP + phosphate + H(+). Its function is as follows. Epithelial ion channel that plays an important role in the regulation of epithelial ion and water transport and fluid homeostasis. Mediates the transport of chloride ions across the cell membrane. Possesses an intrinsic ATPase activity and utilizes ATP to gate its channel; the passive flow of anions through the channel is gated by cycles of ATP binding and hydrolysis by the ATP-binding domains. The ion channel is also permeable to HCO(3)(-); selectivity depends on the extracellular chloride concentration. Exerts its function also by modulating the activity of other ion channels and transporters. Contributes to the regulation of the pH and the ion content of the epithelial fluid layer. Modulates the activity of the epithelial sodium channel (ENaC) complex, in part by regulating the cell surface expression of the ENaC complex. May regulate bicarbonate secretion and salvage in epithelial cells by regulating the transporter SLC4A7. Can inhibit the chloride channel activity of ANO1. Plays a role in the chloride and bicarbonate homeostasis during sperm epididymal maturation and capacitation. The polypeptide is Cystic fibrosis transmembrane conductance regulator (Canis lupus familiaris (Dog)).